The following is a 289-amino-acid chain: Nucleotide-binding protein MS1718 (289 aa).

Residue 8-15 (GRSGAGKS) participates in ATP binding. 56-59 (DIRN) contacts GTP.

The protein belongs to the RapZ-like family.

Functionally, displays ATPase and GTPase activities. The sequence is that of Nucleotide-binding protein MS1718 from Mannheimia succiniciproducens (strain KCTC 0769BP / MBEL55E).